A 488-amino-acid polypeptide reads, in one-letter code: Acetyl-coenzyme A carboxylase carboxyl transferase subunit beta, chloroplastic (488 aa).

Residues 189-211 (ISGSDSGSSNIRTDGNGSDIRGR) are disordered. The 265-residue stretch at 224 to 488 (LWVQCENCYG…LHGFFPLTQN (265 aa)) folds into the CoA carboxyltransferase N-terminal domain. Residues C228, C231, C247, and C250 each coordinate Zn(2+). The C4-type zinc finger occupies 228-250 (CENCYGLNYKKFFKSKMNICEQC).

Belongs to the AccD/PCCB family. In terms of assembly, acetyl-CoA carboxylase is a heterohexamer composed of biotin carboxyl carrier protein, biotin carboxylase and 2 subunits each of ACCase subunit alpha and ACCase plastid-coded subunit beta (accD). The cofactor is Zn(2+).

The protein resides in the plastid. Its subcellular location is the chloroplast stroma. It carries out the reaction N(6)-carboxybiotinyl-L-lysyl-[protein] + acetyl-CoA = N(6)-biotinyl-L-lysyl-[protein] + malonyl-CoA. It participates in lipid metabolism; malonyl-CoA biosynthesis; malonyl-CoA from acetyl-CoA: step 1/1. In terms of biological role, component of the acetyl coenzyme A carboxylase (ACC) complex. Biotin carboxylase (BC) catalyzes the carboxylation of biotin on its carrier protein (BCCP) and then the CO(2) group is transferred by the transcarboxylase to acetyl-CoA to form malonyl-CoA. The sequence is that of Acetyl-coenzyme A carboxylase carboxyl transferase subunit beta, chloroplastic from Liriodendron tulipifera (Tuliptree).